The sequence spans 197 residues: Thymidine kinase (197 aa).

Residues 9 to 16 (SAMDAGKT) and 87 to 90 (DEIH) each bind ATP. Glu88 acts as the Proton acceptor in catalysis. The Zn(2+) site is built by Cys145, Cys147, Cys187, and His190.

The protein belongs to the thymidine kinase family. As to quaternary structure, homotetramer.

The protein localises to the cytoplasm. It catalyses the reaction thymidine + ATP = dTMP + ADP + H(+). The polypeptide is Thymidine kinase (Francisella tularensis subsp. tularensis (strain SCHU S4 / Schu 4)).